A 579-amino-acid polypeptide reads, in one-letter code: MFESQDHSIRTITELKVRTFEEEMDPVRSWVRNVGVIDANIAAQSGVALSRAHFEKQPPSNLRKSNFFHFVLALYDRNGQPVEVERTSFVDFVEQDKTGEKTNNGTHYKLQLLYSNGVRTEQDLYARLIDSVTKQPISYEGQNKNPEMCRVLLTHEVMCSRCCEKKSCGNRNETPSDPVIIDRFFLKFFLKCNQNCLKTAGNPRDMRRFQVVLSTTVCVDGPVLAISDNMFVHNNSKHGRRSRRMDPNETVENNMEYATPCIKAISPSEGWTTGGAMVIVIGENFFDGLQVVFGSMLVWSELITPHAIRVQTPPRHIPGVVEVTLSYKSKQFCKGAPGRFIYTALNEPTIDYGFQRLQKLIPRHPGDPDKLAKEMLLKRAADVVESLYGNTTSNQDMLLKRAADIAEALYSVPRPHSQLQAMPSSPVHGSVMGLSSYPTQLGVSIGEPGQTSGQGYTRNSSSLSPRGYPSSSTPQQSAYGSNGGMSYGAVPMSSLGVSGSPGFNSASPNSSPYAIMPSSPPGSSSSSSLLPFSSFPSSTKQKSAFAPVLRPQGFPHHPSAKTSGGTSFRAMTGLVVPPM.

Positions 63 to 66 (RKSN) are interaction with DNA. The segment at 149–168 (CRVLLTHEVMCSRCCEKKSC) adopts a C5-type zinc-finger fold. Interaction with DNA regions lie at residues 195 to 202 (NCLKTAGN) and 234 to 237 (NNSK). The IPT/TIG domain occupies 260–343 (PCIKAISPSE…KGAPGRFIYT (84 aa)). Disordered regions lie at residues 442 to 482 (GVSI…YGSN), 514 to 533 (AIMPSSPPGSSSSSSLLPFS), and 549 to 579 (LRPQGFPHHPSAKTSGGTSFRAMTGLVVPPM). Polar residues predominate over residues 449 to 459 (GQTSGQGYTRN). 2 stretches are compositionally biased toward low complexity: residues 460–472 (SSSLSPRGYPSSS) and 521–533 (PGSSSSSSLLPFS).

It belongs to the COE family.

Its subcellular location is the nucleus. The sequence is that of Transcription factor COE2 (coe2) from Danio rerio (Zebrafish).